Here is a 1203-residue protein sequence, read N- to C-terminus: DNA-directed RNA polymerase subunit beta (1203 aa).

Residues 1167–1203 (LSKYAQQQEEQRKAAAQTDESKTAPATKNESQPNTQD) form a disordered region. The span at 1190-1203 (APATKNESQPNTQD) shows a compositional bias: polar residues.

It belongs to the RNA polymerase beta chain family. The RNAP catalytic core consists of 2 alpha, 1 beta, 1 beta' and 1 omega subunit. When a sigma factor is associated with the core the holoenzyme is formed, which can initiate transcription.

It carries out the reaction RNA(n) + a ribonucleoside 5'-triphosphate = RNA(n+1) + diphosphate. Functionally, DNA-dependent RNA polymerase catalyzes the transcription of DNA into RNA using the four ribonucleoside triphosphates as substrates. This chain is DNA-directed RNA polymerase subunit beta, found in Levilactobacillus brevis (strain ATCC 367 / BCRC 12310 / CIP 105137 / JCM 1170 / LMG 11437 / NCIMB 947 / NCTC 947) (Lactobacillus brevis).